The sequence spans 102 residues: Small ribosomal subunit protein uS10 (102 aa).

This sequence belongs to the universal ribosomal protein uS10 family. As to quaternary structure, part of the 30S ribosomal subunit.

Involved in the binding of tRNA to the ribosomes. The chain is Small ribosomal subunit protein uS10 from Saccharolobus islandicus (strain M.16.4 / Kamchatka #3) (Sulfolobus islandicus).